Reading from the N-terminus, the 271-residue chain is MEELRERVWHGSLNVEIMLSDSIVVPNTPLSEKCYHIVVLRESFLALYLPAIVRKLGNNVIVTYENPYKQWWFEYDGVPVPWEYPCGVLFDFLCNSSTTSTGKEDDQRLQMWKLKLCHGNKYPPGILPLVDGLRQVKDHWKHQWKQACFILNGSAKRIMSLSIPDFEAFWQSLISRHQPDYIKVREKLLTPNKTKHIPIRVWTADASFLQPSIPANSDTMTLFDVMTSMDIKLQENNRAIIQGIVICSDEDIINLYDLFASIDGFLYVVIK.

Lys145 is covalently cross-linked (Glycyl lysine isopeptide (Lys-Gly) (interchain with G-Cter in ATG12)).

The protein belongs to the ATG5 family. As to quaternary structure, conjugated with ATG12. Post-translationally, conjugated to ATG12; which is essential for autophagy.

It is found in the preautophagosomal structure membrane. In terms of biological role, involved in cytoplasm to vacuole transport (Cvt) and autophagic vesicle formation. Autophagy is essential for maintenance of amino acid levels and protein synthesis under nitrogen starvation. Required for selective autophagic degradation of the nucleus (nucleophagy). Also required for mitophagy, which eliminates defective or superfluous mitochondria in order to fulfill cellular energy requirements and prevent excess ROS production. Conjugation with ATG12, through a ubiquitin-like conjugating system involving ATG7 as an E1-like activating enzyme and ATG10 as an E2-like conjugating enzyme, is essential for its function. The ATG12-ATG5 conjugate acts as an E3-like enzyme which is required for lipidation of ATG8 and ATG8 association to the vesicle membranes. The protein is Autophagy protein 5 (ATG5) of Kluyveromyces lactis (strain ATCC 8585 / CBS 2359 / DSM 70799 / NBRC 1267 / NRRL Y-1140 / WM37) (Yeast).